A 305-amino-acid chain; its full sequence is Glycine--tRNA ligase alpha subunit (305 aa).

Belongs to the class-II aminoacyl-tRNA synthetase family. Tetramer of two alpha and two beta subunits.

It localises to the cytoplasm. It carries out the reaction tRNA(Gly) + glycine + ATP = glycyl-tRNA(Gly) + AMP + diphosphate. This Janthinobacterium sp. (strain Marseille) (Minibacterium massiliensis) protein is Glycine--tRNA ligase alpha subunit.